The following is a 329-amino-acid chain: Methionyl-tRNA formyltransferase (329 aa).

118–121 contributes to the (6S)-5,6,7,8-tetrahydrofolate binding site; it reads SLLP.

Belongs to the Fmt family.

It catalyses the reaction L-methionyl-tRNA(fMet) + (6R)-10-formyltetrahydrofolate = N-formyl-L-methionyl-tRNA(fMet) + (6S)-5,6,7,8-tetrahydrofolate + H(+). Its function is as follows. Attaches a formyl group to the free amino group of methionyl-tRNA(fMet). The formyl group appears to play a dual role in the initiator identity of N-formylmethionyl-tRNA by promoting its recognition by IF2 and preventing the misappropriation of this tRNA by the elongation apparatus. This is Methionyl-tRNA formyltransferase from Corynebacterium urealyticum (strain ATCC 43042 / DSM 7109).